The primary structure comprises 1101 residues: Rho GTPase-activating protein 30 (1101 aa).

The Rho-GAP domain maps to 20–215 (CDLREHLQHS…FILTHVDQLF (196 aa)). 2 disordered regions span residues 305-397 (RKLP…VRAL) and 450-499 (LQPR…LEDS). Over residues 309-319 (LRVEDREEKSS) the composition is skewed to basic and acidic residues. The segment covering 348 to 367 (SSSSQPSSLMPESLESNSME) has biased composition (low complexity). Pro residues predominate over residues 451–465 (QPRPSPALGPGPPGS). Position 578 is a phosphoserine (Ser-578). The interval 622–848 (LGPKPINWEG…EQKSIDVETE (227 aa)) is disordered. Composition is skewed to basic and acidic residues over residues 659–677 (TRQEKEAKPRSTSDNREEA), 686–762 (EAGK…KGDD), 786–821 (EVVHKHEAEKGRESETKELRRKSDLKSREDQGHSED), and 829–844 (DDRKEGVFSKEQKSID). The residue at position 875 (Ser-875) is a Phosphoserine. Disordered stretches follow at residues 878 to 901 (EINEQTSEMKQAPLQPSEPEGMEA) and 968 to 987 (CPRPGRLDGTPGEKAWGSRA). A Phosphoserine modification is found at Ser-996. Residues 1044 to 1076 (SRPLSCLERPPEGTEGSEPRSRLSLPPRELHPV) form a disordered region. The segment covering 1052–1064 (RPPEGTEGSEPRS) has biased composition (basic and acidic residues).

As to quaternary structure, interacts with RHOU in a GTP-independent manner.

The protein localises to the cytoplasmic vesicle. Functionally, GTPase-activating protein (GAP) for RAC1 and RHOA, but not for CDC42. The sequence is that of Rho GTPase-activating protein 30 (Arhgap30) from Mus musculus (Mouse).